We begin with the raw amino-acid sequence, 43 residues long: MSQKLSFFQQNTRNGSGASRTLVIKPPTIQPKPENSISKTFSK.

2 stretches are compositionally biased toward polar residues: residues M1–S19 and P33–K43. Residues M1 to K43 form a disordered region.

This is an uncharacterized protein from Dictyostelium discoideum (Social amoeba).